Consider the following 282-residue polypeptide: Pantothenate synthetase (282 aa).

30–37 (MGFLHDGH) contacts ATP. His-37 acts as the Proton donor in catalysis. Gln-60 is a (R)-pantoate binding site. Residue Gln-60 participates in beta-alanine binding. 146–149 (GQKD) serves as a coordination point for ATP. Gln-152 is a binding site for (R)-pantoate. ATP contacts are provided by residues Ile-175 and 183-186 (KSSR).

The protein belongs to the pantothenate synthetase family. Homodimer.

The protein localises to the cytoplasm. The enzyme catalyses (R)-pantoate + beta-alanine + ATP = (R)-pantothenate + AMP + diphosphate + H(+). It participates in cofactor biosynthesis; (R)-pantothenate biosynthesis; (R)-pantothenate from (R)-pantoate and beta-alanine: step 1/1. In terms of biological role, catalyzes the condensation of pantoate with beta-alanine in an ATP-dependent reaction via a pantoyl-adenylate intermediate. In Campylobacter jejuni (strain RM1221), this protein is Pantothenate synthetase.